Here is a 250-residue protein sequence, read N- to C-terminus: uncharacterized protein (250 aa).

A compositionally biased stretch (basic and acidic residues) spans 207–226; it reads LNDRDAINKSEEARKAREEV. A disordered region spans residues 207–250; that stretch reads LNDRDAINKSEEARKAREEVFIPSEPSKPSIASKRSSASKSTKS. The segment covering 233–250 has biased composition (low complexity); that stretch reads SKPSIASKRSSASKSTKS.

The protein localises to the plastid. The protein resides in the chloroplast. This is an uncharacterized protein from Chlorella vulgaris (Green alga).